The primary structure comprises 380 residues: Cytochrome b (380 aa).

4 helical membrane passes run 33 to 53, 77 to 98, 113 to 133, and 178 to 198; these read FGSL…FLAM, WLIR…YLHV, WNIG…GYVL, and FFAF…IHLL. The heme b site is built by His83 and His97. Heme b is bound by residues His182 and His196. Residue His201 coordinates a ubiquinone. Transmembrane regions (helical) follow at residues 226 to 246, 288 to 308, 320 to 340, and 347 to 367; these read YKDM…TLFT, LGGV…PILH, ITQM…WIGG, and FMTI…ILIP.

The protein belongs to the cytochrome b family. As to quaternary structure, the cytochrome bc1 complex contains 3 respiratory subunits (MT-CYB, CYC1 and UQCRFS1), 2 core proteins (UQCRC1 and UQCRC2) and probably 6 low-molecular weight proteins. Requires heme b as cofactor.

It localises to the mitochondrion inner membrane. Component of the ubiquinol-cytochrome c reductase complex (complex III or cytochrome b-c1 complex) that is part of the mitochondrial respiratory chain. The b-c1 complex mediates electron transfer from ubiquinol to cytochrome c. Contributes to the generation of a proton gradient across the mitochondrial membrane that is then used for ATP synthesis. In Latimeria chalumnae (Coelacanth), this protein is Cytochrome b (mt-cyb).